Here is a 198-residue protein sequence, read N- to C-terminus: Recombination protein RecR (198 aa).

Residues Cys-57–Cys-72 form a C4-type zinc finger. Residues Ser-80 to Ser-175 enclose the Toprim domain.

The protein belongs to the RecR family.

Functionally, may play a role in DNA repair. It seems to be involved in an RecBC-independent recombinational process of DNA repair. It may act with RecF and RecO. This Staphylococcus saprophyticus subsp. saprophyticus (strain ATCC 15305 / DSM 20229 / NCIMB 8711 / NCTC 7292 / S-41) protein is Recombination protein RecR.